Here is a 462-residue protein sequence, read N- to C-terminus: Zinc transporter 6-B (462 aa).

Residues 1 to 33 lie on the Cytoplasmic side of the membrane; it reads MGTIYLFRKTQRSLLGKLTQEFRLVTADRRSWK. Residues 34–54 traverse the membrane as a helical segment; that stretch reads ILLFGAINVVCTGFLLTWCSS. Topologically, residues 55-64 are extracellular; the sequence is TNSMALTAYT. The chain crosses the membrane as a helical span at residues 65 to 85; that stretch reads YLTIFDLFSLITSLISYWVMM. The Cytoplasmic portion of the chain corresponds to 86 to 98; that stretch reads KKPSPTYSFGFER. Residues 99 to 119 form a helical membrane-spanning segment; the sequence is LEVLAVFASTVLAQLGALFIL. The Extracellular portion of the chain corresponds to 120 to 134; sequence KESAERFLEQPEIHT. A helical membrane pass occupies residues 135-155; that stretch reads GRLLVGTFVALFFNLFTMLSI. Residues 156–200 lie on the Cytoplasmic side of the membrane; the sequence is RNKPFAYVSEAASTSWLQEHVADLSRSLCGVIPGLSSIFLPRMNP. A helical transmembrane segment spans residues 201–221; sequence FVLIDIAGALALCITYMLIEI. Over 222–223 the chain is Extracellular; the sequence is NN. The helical transmembrane segment at 224-244 threads the bilayer; it reads YFAVDTASAIAIAVMTFGTMY. Over 245–462 the chain is Cytoplasmic; the sequence is PMSVYSGKVL…TPGQFTQFRQ (218 aa).

This sequence belongs to the cation diffusion facilitator (CDF) transporter (TC 2.A.4) family. SLC30A subfamily. In terms of assembly, heterodimer with SLC30A5; form a functional zinc ion transmembrane transporter.

It localises to the golgi apparatus. It is found in the trans-Golgi network membrane. Its function is as follows. Has probably no intrinsic transporter activity but together with SLC30A5 forms a functional zinc ion:proton antiporter heterodimer, mediating zinc entry into the lumen of organelles along the secretory pathway. As part of that zinc ion:proton antiporter, contributes to zinc ion homeostasis within the early secretory pathway and regulates the activation and folding of enzymes like alkaline phosphatases and enzymes involved in phosphatidylinositol glycan anchor biosynthesis. This chain is Zinc transporter 6-B (slc30a6-b), found in Xenopus laevis (African clawed frog).